A 217-amino-acid polypeptide reads, in one-letter code: Uracil-DNA glycosylase (217 aa).

D62 (proton acceptor) is an active-site residue.

It belongs to the uracil-DNA glycosylase (UDG) superfamily. UNG family.

The protein localises to the cytoplasm. It carries out the reaction Hydrolyzes single-stranded DNA or mismatched double-stranded DNA and polynucleotides, releasing free uracil.. Its function is as follows. Excises uracil residues from the DNA which can arise as a result of misincorporation of dUMP residues by DNA polymerase or due to deamination of cytosine. This Streptococcus pyogenes serotype M6 (strain ATCC BAA-946 / MGAS10394) protein is Uracil-DNA glycosylase.